A 1220-amino-acid chain; its full sequence is Plasma membrane calcium-transporting ATPase 1 (1220 aa).

N-acetylglycine is present on glycine 2. The Cytoplasmic segment spans residues 2–105 (GDMANNSVAY…KTFLQLVWEA (104 aa)). Serine 8 and serine 17 each carry phosphoserine. The helical transmembrane segment at 106–126 (LQDVTLIILEIAAIVSLGLSF) threads the bilayer. The Extracellular portion of the chain corresponds to 127–154 (YQPPEGDNALCGEVSVGEEEGEGETGWI). Residues 155-175 (EGAAILLSVVCVVLVTAFNDW) traverse the membrane as a helical segment. Over 176–366 (SKEKQFRGLQ…KEKSVLQGKL (191 aa)) the chain is Cytoplasmic. Residues 297 to 356 (EEEKKDEKKKEKKNKKQDGAIENRNKAKAQDGAAMEMQPLKSEEGGDGDEKDKKKANLPK) are disordered. 2 stretches are compositionally biased toward basic and acidic residues: residues 312-325 (KQDGAIENRNKAKA) and 337-356 (KSEEGGDGDEKDKKKANLPK). The residue at position 338 (serine 338) is a Phosphoserine. Residues 367–386 (TKLAVQIGKAGLLMSAITVI) traverse the membrane as a helical segment. Over 387–418 (ILVLYFVIDTFWVQKRPWLAECTPIYIQYFVK) the chain is Extracellular. Residues 419–439 (FFIIGVTVLVVAVPEGLPLAV) traverse the membrane as a helical segment. The Cytoplasmic portion of the chain corresponds to 440-855 (TISLAYSVKK…RNVYDSISKF (416 aa)). The 4-aspartylphosphate intermediate role is filled by aspartate 475. Residues aspartate 475, threonine 477, and aspartate 797 each coordinate Mg(2+). Residues 856–876 (LQFQLTVNVVAVIVAFTGACI) form a helical membrane-spanning segment. Residues 877 to 882 (TQDSPL) are Extracellular-facing. The chain crosses the membrane as a helical span at residues 883-903 (KAVQMLWVNLIMDTLASLALA). Over 904 to 927 (TEPPTESLLLRKPYGRNKPLISRT) the chain is Cytoplasmic. Residues 928–948 (MMKNILGHAFYQLVVVFTLLF) form a helical membrane-spanning segment. At 949–971 (AGEKFFDIDSGRNAPLHAPPSEH) the chain is on the extracellular side. Residues 972–991 (YTIVFNTFVLMQLFNEINAR) traverse the membrane as a helical segment. At 992-1005 (KIHGERNVFEGIFN) the chain is on the cytoplasmic side. Residues 1006 to 1027 (NAIFCTIVLGTFVVQIIIVQFG) form a helical membrane-spanning segment. The Extracellular segment spans residues 1028–1039 (GKPFSCSELSIE). Residues 1040 to 1060 (QWLWSIFLGMGTLLWGQLIST) traverse the membrane as a helical segment. Topologically, residues 1061–1220 (IPTSRLKFLK…SPLHSLETSL (160 aa)) are cytoplasmic. The tract at residues 1100–1117 (LRRGQILWFRGLNRIQTQ) is calmodulin-binding subdomain A. At threonine 1116 the chain carries Phosphothreonine; by PKC. Residues 1118-1220 (IRVVNAFRSS…SPLHSLETSL (103 aa)) form a required for basolateral membrane targeting region. Phosphoserine is present on residues serine 1140 and serine 1155. Positions 1162-1220 (IDDTDAEDDAPTKRNSSPPPSPNKNNNAVDSGIHLTIEMNKSATSSSPGSPLHSLETSL) are disordered. Phosphothreonine is present on threonine 1165. Serine 1177 is subject to Phosphoserine; by PKA. Serine 1178 and serine 1182 each carry phosphoserine. Over residues 1200-1220 (MNKSATSSSPGSPLHSLETSL) the composition is skewed to polar residues.

Belongs to the cation transport ATPase (P-type) (TC 3.A.3) family. Type IIB subfamily. In terms of assembly, monomer. Dimer. Oligomer. Calmodulin binding. Interacts with PDZD11. Interacts with SLC35G1 and STIM1. Interacts with YWHAE; interacts with the monomeric and dimeric forms of the YWHAE but prefer the monomer form; this interaction inhibits calcium-transporting ATPase activity. Interacts with NPTN; this interaction stabilizes ATP2B1 and increases ATPase activity; this interaction controls T cell calcium homeostasis following T cell activation. Interacts with EPB41; regulates small intestinal calcium absorption through regulation of membrane expression of ATP2B1. Isoform B is ubiquitously expressed. Isoforms A and E have only been found in brain cortex. Isoform C is found in brain cortex, skeletal muscle and heart muscle. Isoform D has only been found in fetal skeletal muscle. Isoform K has been found in small intestine and liver. Isoform B is expressed in hair cells of inner ear.

The protein localises to the cell membrane. It localises to the basolateral cell membrane. Its subcellular location is the synapse. It is found in the presynaptic cell membrane. The protein resides in the cytoplasmic vesicle. The protein localises to the secretory vesicle. It localises to the synaptic vesicle membrane. It catalyses the reaction Ca(2+)(in) + ATP + H2O = Ca(2+)(out) + ADP + phosphate + H(+). In terms of biological role, catalyzes the hydrolysis of ATP coupled with the transport of calcium from the cytoplasm to the extracellular space thereby maintaining intracellular calcium homeostasis. Plays a role in blood pressure regulation through regulation of intracellular calcium concentration and nitric oxide production leading to regulation of vascular smooth muscle cells vasoconstriction. Positively regulates bone mineralization through absorption of calcium from the intestine. Plays dual roles in osteoclast differentiation and survival by regulating RANKL-induced calcium oscillations in preosteoclasts and mediating calcium extrusion in mature osteoclasts. Regulates insulin sensitivity through calcium/calmodulin signaling pathway by regulating AKT1 activation and NOS3 activation in endothelial cells. May play a role in synaptic transmission by modulating calcium and proton dynamics at the synaptic vesicles. The sequence is that of Plasma membrane calcium-transporting ATPase 1 from Rattus norvegicus (Rat).